The following is a 35-amino-acid chain: Flavodoxin (35 aa).

Residues 4 to 35 (IGLFYGTZTGKTESVAEIIDEFGDEVVTLDID) enclose the Flavodoxin-like domain.

Belongs to the flavodoxin family. The cofactor is FMN.

Low-potential electron donor to a number of redox enzymes. This Nostoc sp. (strain MAC) protein is Flavodoxin.